Here is an 80-residue protein sequence, read N- to C-terminus: U-actitoxin-Avd9a (80 aa).

The signal sequence occupies residues M1–A20. The propeptide occupies E21–I39. The ShKT domain maps to C45–C80. 3 cysteine pairs are disulfide-bonded: C45–C80, C54–C73, and C63–C77. The interval K68–Y69 is crucial for binding to potassium channels.

This sequence belongs to the sea anemone type 1 potassium channel toxin family. Type 1b subfamily.

It is found in the secreted. The protein resides in the nematocyst. Functionally, inhibits voltage-gated potassium channels (Kv1/KCNA). This chain is U-actitoxin-Avd9a, found in Anemonia viridis (Snakelocks anemone).